The following is a 325-amino-acid chain: tRNA(Ile)-lysidine synthase (325 aa).

34–39 (SGGADS) lines the ATP pocket.

Belongs to the tRNA(Ile)-lysidine synthase family.

It is found in the cytoplasm. The enzyme catalyses cytidine(34) in tRNA(Ile2) + L-lysine + ATP = lysidine(34) in tRNA(Ile2) + AMP + diphosphate + H(+). Functionally, ligates lysine onto the cytidine present at position 34 of the AUA codon-specific tRNA(Ile) that contains the anticodon CAU, in an ATP-dependent manner. Cytidine is converted to lysidine, thus changing the amino acid specificity of the tRNA from methionine to isoleucine. The chain is tRNA(Ile)-lysidine synthase from Rhodococcus opacus (strain B4).